We begin with the raw amino-acid sequence, 317 residues long: Tyrosine--tRNA ligase (317 aa).

Tyrosine 33 contributes to the L-tyrosine binding site. The short motif at 38 to 46 (PSGKIHMGH) is the 'HIGH' region element. L-tyrosine-binding residues include tyrosine 155, glutamine 159, aspartate 162, and glutamine 177. The short motif at 211-215 (KMASS) is the 'KMSKS' region element. Residue serine 214 coordinates ATP.

Belongs to the class-I aminoacyl-tRNA synthetase family. TyrS type 3 subfamily. In terms of assembly, homodimer.

The protein localises to the cytoplasm. It carries out the reaction tRNA(Tyr) + L-tyrosine + ATP = L-tyrosyl-tRNA(Tyr) + AMP + diphosphate + H(+). Its function is as follows. Catalyzes the attachment of tyrosine to tRNA(Tyr) in a two-step reaction: tyrosine is first activated by ATP to form Tyr-AMP and then transferred to the acceptor end of tRNA(Tyr). This Methanosarcina mazei (strain ATCC BAA-159 / DSM 3647 / Goe1 / Go1 / JCM 11833 / OCM 88) (Methanosarcina frisia) protein is Tyrosine--tRNA ligase.